Here is an 89-residue protein sequence, read N- to C-terminus: uncharacterized protein (89 aa).

Position 1 (Met-1) is a topological domain, cytoplasmic. A helical membrane pass occupies residues 2 to 22 (LFEIIYIVSSLFYIVSIIYTL). Topologically, residues 23–89 (MRIKHINTVA…ELKKSKLCEG (67 aa)) are extracellular.

Its subcellular location is the host membrane. This is an uncharacterized protein from Sulfolobus islandicus filamentous virus (isolate Iceland/Hveragerdi) (SIFV).